The chain runs to 228 residues: Endo-1,4-beta-xylanase B (228 aa).

The N-terminal stretch at 1-19 (MVSFTYLLAAVSAVTGAVA) is a signal peptide. Residues 37–227 (KRTSPTTGVN…SSGQATMTVS (191 aa)) form the GH11 domain. E122 serves as the catalytic Nucleophile. Residue E214 is the Proton donor of the active site.

This sequence belongs to the glycosyl hydrolase 11 (cellulase G) family.

It localises to the secreted. The catalysed reaction is Endohydrolysis of (1-&gt;4)-beta-D-xylosidic linkages in xylans.. It participates in glycan degradation; xylan degradation. With respect to regulation, inhibited by the proteinaceous endoxylanase inhibitor I from T.aestivum (TAXI-I). In terms of biological role, endo-1,4-beta-xylanase involved in the hydrolysis of xylan, a major structural heterogeneous polysaccharide found in plant biomass representing the second most abundant polysaccharide in the biosphere, after cellulose. Plays an important role in causing fusarium head blight (FHB) on cereal crops. Induces cell death and hydrogen peroxide accumulation in infected wheat leaves. The protein is Endo-1,4-beta-xylanase B (XYLB) of Gibberella zeae (strain ATCC MYA-4620 / CBS 123657 / FGSC 9075 / NRRL 31084 / PH-1) (Wheat head blight fungus).